Here is a 1356-residue protein sequence, read N- to C-terminus: Probable aldehyde oxidase 3 (1356 aa).

Positions 10-97 (RAVVVAVNGE…HCAVTTSEGI (88 aa)) constitute a 2Fe-2S ferredoxin-type domain. Residues Cys-49, Cys-54, Cys-57, and Cys-79 each coordinate [2Fe-2S] cluster. The 193-residue stretch at 245 to 437 (VVVTGDGWFH…TFQTFRAAPR (193 aa)) folds into the FAD-binding PCMH-type domain. The segment at 552–576 (NGSFTNGTANGIVDSSPEKHSNVDS) is disordered.

This sequence belongs to the xanthine dehydrogenase family. As to quaternary structure, aldehyde oxidases (AO) are homodimers and heterodimers of AO subunits. It depends on [2Fe-2S] cluster as a cofactor. FAD is required as a cofactor. Mo-molybdopterin serves as cofactor.

It carries out the reaction an aldehyde + O2 + H2O = a carboxylate + H2O2 + H(+). This chain is Probable aldehyde oxidase 3, found in Oryza sativa subsp. japonica (Rice).